A 470-amino-acid polypeptide reads, in one-letter code: 3-isopropylmalate dehydratase large subunit (470 aa).

Positions 294–307 (PDQNTGISGSTPNP) are enriched in polar residues. The tract at residues 294-313 (PDQNTGISGSTPNPSDAADD) is disordered. Residues C347, C407, and C410 each coordinate [4Fe-4S] cluster.

The protein belongs to the aconitase/IPM isomerase family. LeuC type 1 subfamily. In terms of assembly, heterodimer of LeuC and LeuD. [4Fe-4S] cluster serves as cofactor.

The catalysed reaction is (2R,3S)-3-isopropylmalate = (2S)-2-isopropylmalate. Its pathway is amino-acid biosynthesis; L-leucine biosynthesis; L-leucine from 3-methyl-2-oxobutanoate: step 2/4. Catalyzes the isomerization between 2-isopropylmalate and 3-isopropylmalate, via the formation of 2-isopropylmaleate. In Akkermansia muciniphila (strain ATCC BAA-835 / DSM 22959 / JCM 33894 / BCRC 81048 / CCUG 64013 / CIP 107961 / Muc), this protein is 3-isopropylmalate dehydratase large subunit.